The sequence spans 1442 residues: MSFAAYKMMHWPTGVENCASGYITHSLSDSTLQIPIVSVHDDIEAEWPNPKRGIGPLPNVVITAANILEVYIVRAQEEGNTQELRNPKLAKRGGVMDGVYGVSLELVCHYRLHGNVESIAVLPMGGGNSSKGRDSIILTFRDAKISVLEFDDSIHSLRMTSMHCFEGPDWLHLKRGRESFPRGPLVKVDPQGRCGGVLVYGLQMIILKTSQVGSGLVGDDDAFSSGGTVSARVESSYIINLRDLEMKHVKDFVFLHGYIEPVIVILQEEEHTWAGRVSWKHHTCVLSALSINSTLKQHPVIWSAINLPHDAYKLLAVPSPIGGVLVLCANTIHYHSQSASCALALNNYASSADSSQELPASNFSVELDAAHGTWISNDVALLSTKSGELLLLTLIYDGRAVQRLDLSKSKASVLASDITSVGNSLFFLGSRLGDSLLVQFSCRSGPAASLPGLRDEDEDIEGEGHQAKRLRMTSDTFQDTIGNEELSLFGSTPNNSDSAQKSFSFAVRDSLVNVGPVKDFAYGLRINADANATGVSKQSNYELVCCSGHGKNGALCVLRQSIRPEMITEVELPGCKGIWTVYHKSSRGHNADSSKMAADEDEYHAYLIISLEARTMVLETADLLTEVTESVDYYVQGRTIAAGNLFGRRRVIQVFEHGARILDGSFMNQELSFGASNSESNSGSESSTVSSVSIADPYVLLRMTDDSIRLLVGDPSTCTVSISSPSVLEGSKRKISACTLYHDKGPEPWLRKASTDAWLSSGVGEAVDSVDGGPQDQGDIYCVVCYESGALEIFDVPSFNCVFSVDKFASGRRHLSDMPIHELEYELNKNSEDNTSSKEIKNTRVVELAMQRWSGHHTRPFLFAVLADGTILCYHAYLFDGVDSTKAENSLSSENPAALNSSGSSKLRNLKFLRIPLDTSTREGTSDGVASQRITMFKNISGHQGFFLSGSRPGWCMLFRERLRFHSQLCDGSIAAFTVLHNVNCNHGFIYVTAQGVLKICQLPSASIYDNYWPVQKIPLKATPHQVTYYAEKNLYPLIVSYPVSKPLNQVLSSLVDQEAGQQLDNHNMSSDDLQRTYTVEEFEIQILEPERSGGPWETKAKIPMQTSEHALTVRVVTLLNASTGENETLLAVGTAYVQGEDVAARGRVLLFSFGKNGDNSQNVVTEVYSRELKGAISAVASIQGHLLISSGPKIILHKWNGTELNGVAFFDAPPLYVVSMNVVKSFILLGDVHKSIYFLSWKEQGSQLSLLAKDFESLDCFATEFLIDGSTLSLAVSDEQKNIQVFYYAPKMIESWKGLKLLSRAEFHVGAHVSKFLRLQMVSSGADKINRFALLFGTLDGSFGCIAPLDEVTFRRLQSLQKKLVDAVPHVAGLNPLAFRQFRSSGKARRSGPDSIVDCELLCHYEMLPLEEQLELAHQIGTTRYSILKDLVDLSVGTSFL.

The protein belongs to the CPSF1 family. Component of the CPSF complex, at least composed of CPSF160, CPSF100, CPSF73-I, CPSF73-II, CPSF30, FY and FIPS5. Forms a complex with cleavage and polyadenylation specificity factor (CPSF) subunits FY, CPSF30, CPSF73-I, CPSF 73-II and CPSF100.

It is found in the nucleus. CPSF plays a key role in pre-mRNA 3'-end formation, recognizing the AAUAAA signal sequence and interacting with poly(A)polymerase and other factors to bring about cleavage and poly(A) addition. This subunit is involved in the RNA recognition step of the polyadenylation reaction. This chain is Cleavage and polyadenylation specificity factor subunit 1 (CPSF160), found in Arabidopsis thaliana (Mouse-ear cress).